Consider the following 153-residue polypeptide: Large ribosomal subunit protein uL30 (153 aa).

Belongs to the universal ribosomal protein uL30 family. Part of the 50S ribosomal subunit.

This is Large ribosomal subunit protein uL30 from Methanocorpusculum labreanum (strain ATCC 43576 / DSM 4855 / Z).